Here is a 545-residue protein sequence, read N- to C-terminus: Chaperonin GroEL (545 aa).

Residues 30 to 33, lysine 51, 87 to 91, glycine 415, and aspartate 495 contribute to the ATP site; these read TLGP and DGTTT.

Belongs to the chaperonin (HSP60) family. Forms a cylinder of 14 subunits composed of two heptameric rings stacked back-to-back. Interacts with the co-chaperonin GroES.

The protein localises to the cytoplasm. The catalysed reaction is ATP + H2O + a folded polypeptide = ADP + phosphate + an unfolded polypeptide.. Together with its co-chaperonin GroES, plays an essential role in assisting protein folding. The GroEL-GroES system forms a nano-cage that allows encapsulation of the non-native substrate proteins and provides a physical environment optimized to promote and accelerate protein folding. In Shewanella denitrificans (strain OS217 / ATCC BAA-1090 / DSM 15013), this protein is Chaperonin GroEL.